The chain runs to 449 residues: Interferon-related developmental regulator 1 (449 aa).

A compositionally biased stretch (basic residues) spans 1–10; that stretch reads MPKNKKRNAP. Residues 1–42 form a disordered region; that stretch reads MPKNKKRNAPHRGGGGGGGSGAATSAATAGGPHRTVQPFSDE. Gly residues predominate over residues 12–21; sequence RGGGGGGGSG. The segment covering 22–31 has biased composition (low complexity); that stretch reads AATSAATAGG.

The protein belongs to the IFRD family. Interacts with PSIP1/LEDGF.

Could play a role in regulating gene activity in the proliferative and/or differentiative pathways induced by NGF. May be an autocrine factor that attenuates or amplifies the initial ligand-induced signal. In Mus musculus (Mouse), this protein is Interferon-related developmental regulator 1 (Ifrd1).